Reading from the N-terminus, the 229-residue chain is Large ribosomal subunit protein uL1 (229 aa).

The protein belongs to the universal ribosomal protein uL1 family. Part of the 50S ribosomal subunit.

Its function is as follows. Binds directly to 23S rRNA. The L1 stalk is quite mobile in the ribosome, and is involved in E site tRNA release. Protein L1 is also a translational repressor protein, it controls the translation of the L11 operon by binding to its mRNA. The protein is Large ribosomal subunit protein uL1 of Lacticaseibacillus casei (strain BL23) (Lactobacillus casei).